A 278-amino-acid chain; its full sequence is Probable esterase TOX9 (278 aa).

Active-site charge relay system residues include Ser-119, Asp-222, and His-250.

Belongs to the LovG family.

It functions in the pathway mycotoxin biosynthesis. Probable esterase; part of the Tox1A locus, one of the 2 loci that mediate the biosynthesis of T-toxin, a family of linear polyketides 37 to 45 carbons in length, of which the major component is 41 carbons, and which leads to high virulence to maize. One of the PKSs (PKS1 or PKS2) could synthesize a precursor, used subsequently by the other PKS as starter unit, to add additional carbons. Variability in the length of the final carbon backbone C35-47 could be achieved by varying the number of condensation cycles, or use of different starter or extender units or might be due to decarboxylation of the penultimate product, catalyzed by DEC1. Additional proteins are required for the biosynthesis of T-toxin, including oxidoreductases RED1, RED2, RED3, LAM1 and OXI1, as well as esterase TOX9. The sequence is that of Probable esterase TOX9 from Cochliobolus heterostrophus (strain C4 / ATCC 48331 / race T) (Southern corn leaf blight fungus).